A 171-amino-acid polypeptide reads, in one-letter code: ATP synthase subunit b (171 aa).

Residues leucine 26–leucine 48 traverse the membrane as a helical segment.

Belongs to the ATPase B chain family. As to quaternary structure, F-type ATPases have 2 components, F(1) - the catalytic core - and F(0) - the membrane proton channel. F(1) has five subunits: alpha(3), beta(3), gamma(1), delta(1), epsilon(1). F(0) has four main subunits: a(1), b(1), b'(1) and c(10-14). The alpha and beta chains form an alternating ring which encloses part of the gamma chain. F(1) is attached to F(0) by a central stalk formed by the gamma and epsilon chains, while a peripheral stalk is formed by the delta, b and b' chains.

Its subcellular location is the cellular thylakoid membrane. In terms of biological role, f(1)F(0) ATP synthase produces ATP from ADP in the presence of a proton or sodium gradient. F-type ATPases consist of two structural domains, F(1) containing the extramembraneous catalytic core and F(0) containing the membrane proton channel, linked together by a central stalk and a peripheral stalk. During catalysis, ATP synthesis in the catalytic domain of F(1) is coupled via a rotary mechanism of the central stalk subunits to proton translocation. Its function is as follows. Component of the F(0) channel, it forms part of the peripheral stalk, linking F(1) to F(0). This chain is ATP synthase subunit b, found in Synechococcus elongatus (strain ATCC 33912 / PCC 7942 / FACHB-805) (Anacystis nidulans R2).